The following is a 519-amino-acid chain: Xylose import ATP-binding protein XylG (519 aa).

ABC transporter domains follow at residues 6–245 (MTMR…VGRE) and 262–507 (FEAR…IRPV). 38-45 (GENGAGKS) contributes to the ATP binding site.

Belongs to the ABC transporter superfamily. Xylose importer (TC 3.A.1.2.4) family. In terms of assembly, the complex is composed of two ATP-binding proteins (XylG), two transmembrane proteins (XylH) and a solute-binding protein (XylF).

It localises to the cell inner membrane. It catalyses the reaction D-xylose(out) + ATP + H2O = D-xylose(in) + ADP + phosphate + H(+). In terms of biological role, part of the ABC transporter complex XylFGH involved in xylose import. Responsible for energy coupling to the transport system. The sequence is that of Xylose import ATP-binding protein XylG from Paraburkholderia xenovorans (strain LB400).